Consider the following 47-residue polypeptide: Putative heat shock protein HSP90 (47 aa).

Arg47 provides a ligand contact to ATP.

The protein belongs to the heat shock protein 90 family. In terms of assembly, homodimer.

Its subcellular location is the cytoplasm. Functionally, putative molecular chaperone that may promote the maturation, structural maintenance and proper regulation of specific target proteins. The protein is Putative heat shock protein HSP90 of Populus euphratica (Euphrates poplar).